We begin with the raw amino-acid sequence, 296 residues long: Small ribosomal subunit protein uS2 (296 aa).

Disordered regions lie at residues 1–24 and 270–296; these read MNTKKEEVVSSPEATVEKKQTQSQ and HELKKSEEASEVKAASTKEKLTEEASQ.

The protein belongs to the universal ribosomal protein uS2 family.

The sequence is that of Small ribosomal subunit protein uS2 from Mycoplasmopsis synoviae (strain 53) (Mycoplasma synoviae).